The chain runs to 661 residues: UvrABC system protein B (661 aa).

The 158-residue stretch at 23-180 (EGLQKGYRIQ…THLARIGYER (158 aa)) folds into the Helicase ATP-binding domain. ATP is bound at residue 36-43 (GVTGSGKT). Positions 89–112 (YYDYYQPEAYIPTRDLYIEKNADI) match the Beta-hairpin motif. Residues 426-592 (QIDDLVNEIA…TIIKPLDEEI (167 aa)) enclose the Helicase C-terminal domain. Residues 620–655 (EEYIALLEEEMYKAASELRYEDAARLRDELFNIREK) form the UVR domain.

This sequence belongs to the UvrB family. As to quaternary structure, forms a heterotetramer with UvrA during the search for lesions. Interacts with UvrC in an incision complex.

Its subcellular location is the cytoplasm. Its function is as follows. The UvrABC repair system catalyzes the recognition and processing of DNA lesions. A damage recognition complex composed of 2 UvrA and 2 UvrB subunits scans DNA for abnormalities. Upon binding of the UvrA(2)B(2) complex to a putative damaged site, the DNA wraps around one UvrB monomer. DNA wrap is dependent on ATP binding by UvrB and probably causes local melting of the DNA helix, facilitating insertion of UvrB beta-hairpin between the DNA strands. Then UvrB probes one DNA strand for the presence of a lesion. If a lesion is found the UvrA subunits dissociate and the UvrB-DNA preincision complex is formed. This complex is subsequently bound by UvrC and the second UvrB is released. If no lesion is found, the DNA wraps around the other UvrB subunit that will check the other stand for damage. This is UvrABC system protein B from Thermosipho africanus (strain TCF52B).